A 117-amino-acid chain; its full sequence is Fluoride-specific ion channel FluC 2 (117 aa).

The next 2 helical transmembrane spans lie at 1 to 21 (MISI…RSAI) and 46 to 66 (FLIG…AFFV). Residues glycine 71 and threonine 74 each contribute to the Na(+) site. A helical membrane pass occupies residues 95 to 115 (LFLNYSLLQFIIGFIACYIGY).

Belongs to the fluoride channel Fluc/FEX (TC 1.A.43) family.

The protein resides in the cell membrane. The catalysed reaction is fluoride(in) = fluoride(out). Na(+) is not transported, but it plays an essential structural role and its presence is essential for fluoride channel function. Functionally, fluoride-specific ion channel. Important for reducing fluoride concentration in the cell, thus reducing its toxicity. The polypeptide is Fluoride-specific ion channel FluC 2 (Staphylococcus aureus (strain NCTC 8325 / PS 47)).